We begin with the raw amino-acid sequence, 102 residues long: Small ribosomal subunit protein uS10 (102 aa).

The protein belongs to the universal ribosomal protein uS10 family. In terms of assembly, part of the 30S ribosomal subunit.

Its function is as follows. Involved in the binding of tRNA to the ribosomes. The sequence is that of Small ribosomal subunit protein uS10 from Methanocorpusculum labreanum (strain ATCC 43576 / DSM 4855 / Z).